Consider the following 885-residue polypeptide: Leucine--tRNA ligase (885 aa).

A 'HIGH' region motif is present at residues 48–58; that stretch reads PYPSGKLHMGH. A 'KMSKS' region motif is present at residues 639–643; sequence TMSKS. An ATP-binding site is contributed by Lys642.

It belongs to the class-I aminoacyl-tRNA synthetase family.

It localises to the cytoplasm. It carries out the reaction tRNA(Leu) + L-leucine + ATP = L-leucyl-tRNA(Leu) + AMP + diphosphate. The chain is Leucine--tRNA ligase from Bordetella parapertussis (strain 12822 / ATCC BAA-587 / NCTC 13253).